The sequence spans 156 residues: NADH-ubiquinone oxidoreductase 20 kDa subunit (156 aa).

Positions 33, 34, 98, and 128 each coordinate [4Fe-4S] cluster.

Belongs to the complex I 20 kDa subunit family. Requires [4Fe-4S] cluster as cofactor.

The protein resides in the mitochondrion. It carries out the reaction a ubiquinone + NADH + 5 H(+)(in) = a ubiquinol + NAD(+) + 4 H(+)(out). The polypeptide is NADH-ubiquinone oxidoreductase 20 kDa subunit (NAD10) (Paramecium tetraurelia).